A 33-amino-acid polypeptide reads, in one-letter code: Brevinin-2Ea (33 aa).

The cysteines at positions 27 and 33 are disulfide-linked.

Belongs to the frog skin active peptide (FSAP) family. Brevinin subfamily. As to expression, expressed by the skin glands.

The protein localises to the secreted. In terms of biological role, shows antibacterial activity against representative Gram-negative and Gram-positive bacterial species, and hemolytic activity. The chain is Brevinin-2Ea from Pelophylax lessonae (Pool frog).